Consider the following 64-residue polypeptide: Translational regulator CsrA (64 aa).

Belongs to the CsrA/RsmA family. In terms of assembly, homodimer; the beta-strands of each monomer intercalate to form a hydrophobic core, while the alpha-helices form wings that extend away from the core.

The protein resides in the cytoplasm. A key translational regulator that binds mRNA to regulate translation initiation and/or mRNA stability. Mediates global changes in gene expression, shifting from rapid growth to stress survival by linking envelope stress, the stringent response and the catabolite repression systems. Usually binds in the 5'-UTR; binding at or near the Shine-Dalgarno sequence prevents ribosome-binding, repressing translation, binding elsewhere in the 5'-UTR can activate translation and/or stabilize the mRNA. Its function is antagonized by small RNA(s). This chain is Translational regulator CsrA, found in Thioalkalivibrio sulfidiphilus (strain HL-EbGR7).